The following is a 30-amino-acid chain: Putative alpha-amylase inhibitor (30 aa).

The protein belongs to the leguminous lectin family.

Lectin and alpha-amylase inhibitor. Acts as a defensive protein against insects. This Phaseolus vulgaris (Kidney bean) protein is Putative alpha-amylase inhibitor.